The primary structure comprises 326 residues: tRNA(Ile)-lysidine synthase (326 aa).

33–38 (SGGPDS) contacts ATP.

This sequence belongs to the tRNA(Ile)-lysidine synthase family.

It localises to the cytoplasm. The catalysed reaction is cytidine(34) in tRNA(Ile2) + L-lysine + ATP = lysidine(34) in tRNA(Ile2) + AMP + diphosphate + H(+). Its function is as follows. Ligates lysine onto the cytidine present at position 34 of the AUA codon-specific tRNA(Ile) that contains the anticodon CAU, in an ATP-dependent manner. Cytidine is converted to lysidine, thus changing the amino acid specificity of the tRNA from methionine to isoleucine. In Novosphingobium aromaticivorans (strain ATCC 700278 / DSM 12444 / CCUG 56034 / CIP 105152 / NBRC 16084 / F199), this protein is tRNA(Ile)-lysidine synthase.